Reading from the N-terminus, the 78-residue chain is Exodeoxyribonuclease 7 small subunit (78 aa).

The protein belongs to the XseB family. In terms of assembly, heterooligomer composed of large and small subunits.

Its subcellular location is the cytoplasm. The catalysed reaction is Exonucleolytic cleavage in either 5'- to 3'- or 3'- to 5'-direction to yield nucleoside 5'-phosphates.. Functionally, bidirectionally degrades single-stranded DNA into large acid-insoluble oligonucleotides, which are then degraded further into small acid-soluble oligonucleotides. The sequence is that of Exodeoxyribonuclease 7 small subunit from Cutibacterium acnes (strain DSM 16379 / KPA171202) (Propionibacterium acnes).